Consider the following 292-residue polypeptide: NAD kinase (292 aa).

The active-site Proton acceptor is Asp73. Residues Asp73–Gly74, Asn147–Glu148, His158, Arg175, Asp177, Thr188–Ser193, and Gln247 contribute to the NAD(+) site.

The protein belongs to the NAD kinase family. Requires a divalent metal cation as cofactor.

It is found in the cytoplasm. It carries out the reaction NAD(+) + ATP = ADP + NADP(+) + H(+). In terms of biological role, involved in the regulation of the intracellular balance of NAD and NADP, and is a key enzyme in the biosynthesis of NADP. Catalyzes specifically the phosphorylation on 2'-hydroxyl of the adenosine moiety of NAD to yield NADP. This is NAD kinase from Photorhabdus laumondii subsp. laumondii (strain DSM 15139 / CIP 105565 / TT01) (Photorhabdus luminescens subsp. laumondii).